Consider the following 445-residue polypeptide: Nuclear envelope integral membrane protein 1 (445 aa).

A signal peptide spans 1–44 (MAGGMKVAVLPAVGAGPWSWGAGGCGAVRLLLVLFGCFVCGSAG). Residue Asn125 is glycosylated (N-linked (GlcNAc...) asparagine). Helical transmembrane passes span 161-181 (PKLF…DLLS), 186-206 (FYYS…IIFI), 216-236 (PIYI…QLVF), 245-265 (CYWQ…FAVC), and 289-309 (LCFM…VVIA). The tract at residues 186–297 (FYYSTGMSVG…GLCFMYSSIQ (112 aa)) is a; required for its colocalization with lamins at the nuclear envelope. Positions 336-405 (TVPPRLLTEE…LTPNEVSVHE (70 aa)) are b; required for interaction with RAN-GTP. A required for nuclear localization region spans residues 336–445 (TVPPRLLTEE…LVVQQNSFLT (110 aa)). Ser368, Ser424, and Ser425 each carry phosphoserine. A compositionally biased stretch (acidic residues) spans 418-430 (ELSEETSSEEEDS). A disordered region spans residues 418-445 (ELSEETSSEEEDSDSRYPLVVQQNSFLT).

Belongs to the NEMP family. Homooligomer. Interacts with RAN-GTP. Interacts with EMD. Phosphorylation may regulate its interaction with RAN-GTP.

It localises to the nucleus inner membrane. It is found in the nucleus envelope. In terms of biological role, together with EMD, contributes to nuclear envelope stiffness in germ cells. Required for female fertility. Essential for normal erythropoiesis. Required for efficient nuclear envelope opening and enucleation during the late stages of erythroblast maturation. This Bos taurus (Bovine) protein is Nuclear envelope integral membrane protein 1 (NEMP1).